Here is an 828-residue protein sequence, read N- to C-terminus: Glycerol-3-phosphate acyltransferase 1, mitochondrial (828 aa).

Topologically, residues 1-87 are cytoplasmic; sequence MDESALTLGT…FFNPSIPSLG (87 aa). The interval 80 to 120 is important for mitochondrial localization; the sequence is NPSIPSLGLRNVIYINETHTRHRGWLARRLSYVLFIQERDV. Residues 88–118 lie within the membrane without spanning it; sequence LRNVIYINETHTRHRGWLARRLSYVLFIQER. Residues 119-828 are Cytoplasmic-facing; sequence DVHKGMFATN…LEYILSFVVL (710 aa). Positions 230–235 match the HXXXXD motif motif; that stretch reads HRSHID. Residues Arg278, Arg279, Lys288, Arg293, and Arg328 each coordinate CoA. At Ser380 the chain carries Phosphoserine. Residues 435 to 455 are disordered; that stretch reads SRPSDAADEGRDTSINESRNA. Residues 442–455 are compositionally biased toward basic and acidic residues; the sequence is DEGRDTSINESRNA. Arg462 serves as a coordination point for CoA. Ser688 and Ser695 each carry phosphoserine. N6-acetyllysine is present on residues Lys780 and Lys784.

It belongs to the GPAT/DAPAT family.

It is found in the mitochondrion outer membrane. The enzyme catalyses sn-glycerol 3-phosphate + an acyl-CoA = a 1-acyl-sn-glycero-3-phosphate + CoA. It carries out the reaction (9Z,12Z)-octadecadienoyl-CoA + sn-glycerol 3-phosphate = 1-(9Z,12Z)-octadecadienoyl-sn-glycero-3-phosphate + CoA. It catalyses the reaction sn-glycerol 3-phosphate + (9Z)-octadecenoyl-CoA = 1-(9Z-octadecenoyl)-sn-glycero-3-phosphate + CoA. The catalysed reaction is sn-glycerol 3-phosphate + octadecanoyl-CoA = 1-octadecanoyl-sn-glycero-3-phosphate + CoA. The enzyme catalyses sn-glycerol 3-phosphate + hexadecanoyl-CoA = 1-hexadecanoyl-sn-glycero-3-phosphate + CoA. It carries out the reaction dodecanoyl-CoA + sn-glycerol 3-phosphate = 1-dodecanoyl-sn-glycerol 3-phosphate + CoA. It catalyses the reaction 1-acyl-sn-glycero-3-phospho-(1'-sn-glycerol) + an acyl-CoA = a 1,2-diacyl-sn-glycero-3-phospho-(1'-sn-glycerol) + CoA. Its pathway is phospholipid metabolism; CDP-diacylglycerol biosynthesis; CDP-diacylglycerol from sn-glycerol 3-phosphate: step 1/3. Its function is as follows. Mitochondrial membrane protein that catalyzes the essential first step of biosynthesis of glycerolipids such as triglycerides, phosphatidic acids and lysophosphatidic acids. Esterifies acyl-group from acyl-coenzyme A (acyl-CoA) to the sn-1 position of glycerol-3-phosphate, to produce lysophosphatidic acid. Has a narrow hydrophobic binding cleft that selects for a linear acyl chain. Catalytic activity is higher for substrates with a 16-carbon acyl chain. In Homo sapiens (Human), this protein is Glycerol-3-phosphate acyltransferase 1, mitochondrial.